Reading from the N-terminus, the 118-residue chain is Vesicle-associated membrane protein 1 (118 aa).

The tract at residues 1 to 36 (MSAPAQPPAEGTEGTAPGGGPPGPPPNMTSNRRLQQ) is disordered. Residues 1 to 96 (MSAPAQPPAE…KRKYWWKNCK (96 aa)) lie on the Cytoplasmic side of the membrane. Residues 33 to 93 (RLQQTQAQVE…AKLKRKYWWK (61 aa)) enclose the v-SNARE coiled-coil homology domain. Serine 63 is subject to Phosphoserine. Residues 97–116 (MMIMLGAICAIIVVVIVIYF) form a helical; Anchor for type IV membrane protein membrane-spanning segment. Topologically, residues 117-118 (FT) are vesicular.

Belongs to the synaptobrevin family. As to quaternary structure, interacts with VAPA and VAPB. (Microbial infection) Targeted and hydrolyzed by C.botulinum neurotoxin type B (BoNT/B, botB) which probably hydrolyzes the 78-Gln-|-Phe-79 bond and inhibits neurotransmitter release. In terms of processing, (Microbial infection) Targeted and hydrolyzed by C.botulinum neurotoxin type D (BoNT/D, botD) which probably hydrolyzes the 61-Arg-|-Leu-62 bond and inhibits neurotransmitter release. BoNT/D has low catalytic activity on this protein due to its sequence. Note that humans are not known to be infected by C.botulinum type D. Post-translationally, (Microbial infection) Targeted and hydrolyzed by C.botulinum neurotoxin type F (BoNT/F, botF) which probably hydrolyzes the 60-Gln-|-Lys-61 bond and inhibits neurotransmitter release. (Microbial infection) Targeted and hydrolyzed by C.botulinum neurotoxin type X (BoNT/X) which probably hydrolyzes the 68-Arg-|-Ala-69 bond and inhibits neurotransmitter release. It remains unknown whether BoNT/X is ever produced, or what organisms it targets. Nervous system, skeletal muscle and adipose tissue.

The protein resides in the cytoplasmic vesicle. The protein localises to the secretory vesicle. It is found in the synaptic vesicle membrane. It localises to the synapse. Its subcellular location is the synaptosome. The protein resides in the cytoplasmic vesicle membrane. The protein localises to the mitochondrion outer membrane. Involved in the targeting and/or fusion of transport vesicles to their target membrane. This chain is Vesicle-associated membrane protein 1 (VAMP1), found in Homo sapiens (Human).